Reading from the N-terminus, the 1247-residue chain is Leucine-rich repeat-containing protein 53 (1247 aa).

LRR repeat units lie at residues 34-55, 58-79, 82-102, 108-129, 132-153, 158-179, and 182-203; these read TTRV…NLSL, NLAL…ALHG, MLRT…TDHT, SLQV…WFRN, GLTR…SFGG, SLRY…AFRP, and QLQE…FTPL. One can recognise an LRRCT domain in the interval 214 to 271; sequence NQWSCTCDLHPLARFLRNYIKSSAHTLRNAKDLNCQPSTAAVAAAQSVLRLSETNCDS. The chain crosses the membrane as a helical span at residues 294–314; it reads LLTVLGFAGAVGLTCLGLVVF. 3 disordered regions span residues 828–866, 887–927, and 1223–1247; these read SAGH…EDAT, VLPF…SPRN, and ENSA…LETE. 2 stretches are compositionally biased toward polar residues: residues 898 to 927 and 1238 to 1247; these read DQGT…SPRN and YATTSPLETE.

The protein resides in the membrane. This chain is Leucine-rich repeat-containing protein 53 (LRRC53), found in Homo sapiens (Human).